A 464-amino-acid polypeptide reads, in one-letter code: Arabinose-proton symporter (464 aa).

12 helical membrane passes run Gly21–Val43, Gly63–Asp85, Ile92–Gln111, Leu116–Ile138, Leu150–Val172, Gly185–Val207, Ala266–Tyr288, Gly303–Ile325, Lys332–Phe354, Val364–Ser386, Ala398–Ile420, and Gly424–Ile446.

This sequence belongs to the major facilitator superfamily. Sugar transporter (TC 2.A.1.1) family.

It is found in the cell membrane. It catalyses the reaction L-arabinose(in) + H(+)(in) = L-arabinose(out) + H(+)(out). The catalysed reaction is D-galactose(in) + H(+)(in) = D-galactose(out) + H(+)(out). It carries out the reaction D-xylose(in) + H(+)(in) = D-xylose(out) + H(+)(out). Uptake of L-arabinose across the cytoplasmic membrane with the concomitant transport of protons into the cell (symport system). In the presence of inducing amounts of L-arabinose, can import both D-galactose and D-xylose. Can also transport the disaccharide alpha-1,5-arabinobiose. This Bacillus subtilis (strain 168) protein is Arabinose-proton symporter (araE).